We begin with the raw amino-acid sequence, 213 residues long: Imidazole glycerol phosphate synthase subunit HisH (213 aa).

The 208-residue stretch at 4–211 (NLGVIDYGMG…LHWLHQGAEP (208 aa)) folds into the Glutamine amidotransferase type-1 domain. The active-site Nucleophile is cysteine 82. Active-site residues include histidine 186 and glutamate 188.

In terms of assembly, heterodimer of HisH and HisF.

The protein resides in the cytoplasm. It carries out the reaction 5-[(5-phospho-1-deoxy-D-ribulos-1-ylimino)methylamino]-1-(5-phospho-beta-D-ribosyl)imidazole-4-carboxamide + L-glutamine = D-erythro-1-(imidazol-4-yl)glycerol 3-phosphate + 5-amino-1-(5-phospho-beta-D-ribosyl)imidazole-4-carboxamide + L-glutamate + H(+). The enzyme catalyses L-glutamine + H2O = L-glutamate + NH4(+). Its pathway is amino-acid biosynthesis; L-histidine biosynthesis; L-histidine from 5-phospho-alpha-D-ribose 1-diphosphate: step 5/9. IGPS catalyzes the conversion of PRFAR and glutamine to IGP, AICAR and glutamate. The HisH subunit catalyzes the hydrolysis of glutamine to glutamate and ammonia as part of the synthesis of IGP and AICAR. The resulting ammonia molecule is channeled to the active site of HisF. In Synechococcus sp. (strain CC9902), this protein is Imidazole glycerol phosphate synthase subunit HisH.